Here is a 162-residue protein sequence, read N- to C-terminus: Phosphopantetheine adenylyltransferase (162 aa).

A substrate-binding site is contributed by S9. ATP contacts are provided by residues 9-10 and H17; that span reads SF. Substrate is bound by residues K41, T73, and R87. Residues 88 to 90, E98, and 122 to 128 contribute to the ATP site; these read GLR and NQNISSS.

The protein belongs to the bacterial CoaD family. Homohexamer. Mg(2+) serves as cofactor.

It localises to the cytoplasm. It carries out the reaction (R)-4'-phosphopantetheine + ATP + H(+) = 3'-dephospho-CoA + diphosphate. The protein operates within cofactor biosynthesis; coenzyme A biosynthesis; CoA from (R)-pantothenate: step 4/5. In terms of biological role, reversibly transfers an adenylyl group from ATP to 4'-phosphopantetheine, yielding dephospho-CoA (dPCoA) and pyrophosphate. This Leuconostoc mesenteroides subsp. mesenteroides (strain ATCC 8293 / DSM 20343 / BCRC 11652 / CCM 1803 / JCM 6124 / NCDO 523 / NBRC 100496 / NCIMB 8023 / NCTC 12954 / NRRL B-1118 / 37Y) protein is Phosphopantetheine adenylyltransferase.